Here is a 157-residue protein sequence, read N- to C-terminus: Arginine repressor (157 aa).

The protein belongs to the ArgR family.

It is found in the cytoplasm. Its pathway is amino-acid biosynthesis; L-arginine biosynthesis [regulation]. Functionally, regulates arginine biosynthesis genes. The protein is Arginine repressor of Bacteroides fragilis (strain YCH46).